Here is a 574-residue protein sequence, read N- to C-terminus: Pyruvate kinase PKLR (574 aa).

4 positions are modified to phosphoserine: Ser2, Ser19, Ser26, and Ser43. Residue Arg116 participates in substrate binding. Positions 118, 120, 156, and 157 each coordinate K(+). 118–121 (NFSH) is an ATP binding site. The ATP site is built by Arg163 and Lys250. Ser292 carries the post-translational modification Phosphoserine. Lys313 is a binding site for substrate. Glu315 contacts Mn(2+). Residues Gly338, Asp339, and Thr371 each contribute to the substrate site. A Mn(2+)-binding site is contributed by Asp339. Residues 475–480 (TKTGRS), Trp525, Arg532, and 559–564 (RPGSGY) each bind beta-D-fructose 1,6-bisphosphate.

This sequence belongs to the pyruvate kinase family. In terms of assembly, homotetramer. The cofactor is Mg(2+). It depends on Mn(2+) as a cofactor. K(+) is required as a cofactor.

The catalysed reaction is pyruvate + ATP = phosphoenolpyruvate + ADP + H(+). It participates in carbohydrate degradation; glycolysis; pyruvate from D-glyceraldehyde 3-phosphate: step 5/5. Its activity is regulated as follows. Allosterically activated by fructose 1,6-bisphosphate. Its function is as follows. Pyruvate kinase that catalyzes the conversion of phosphoenolpyruvate to pyruvate with the synthesis of ATP, and which plays a key role in glycolysis. This Rattus norvegicus (Rat) protein is Pyruvate kinase PKLR (Pklr).